A 419-amino-acid chain; its full sequence is Voltage-gated potassium channel subunit beta-1 (419 aa).

Residues 1–52 (MLAARTGAAGSQISEENTKLRRQSGFSVAGKDKSPKKASENAKDSSLSPSGE) are disordered. Basic and acidic residues predominate over residues 30 to 43 (GKDKSPKKASENAK). NADP(+) is bound by residues Thr-108, Trp-109, Gln-115, and Asp-137. Tyr-142 serves as the catalytic Proton donor/acceptor. Residues Asn-210, Ser-240, Arg-241, Gln-266, Trp-295, Ser-296, Pro-297, Leu-298, Ala-299, Cys-300, Lys-306, Arg-316, Gly-375, Ser-377, Gln-381, Glu-384, and Asn-385 each coordinate NADP(+).

It belongs to the shaker potassium channel beta subunit family. Homotetramer. Interaction with tetrameric potassium channel alpha subunits gives rise to a heterooctamer. Identified in potassium channel complexes containing KCNA1, KCNA2, KCNA4, KCNA5, KCNA6, KCNAB1 and KCNAB2. Part of a complex containing KCNA1, KCNA4 and LGI1; interaction with LGI1 inhibits down-regulation of KCNA1 channel activity. Interacts with the dimer formed by GNB1 and GNG2; this enhances KCNA1 binding. Interacts with SQSTM1. In terms of tissue distribution, in brain, expression is most prominent in caudate nucleus, hippocampus and thalamus. Significant expression also detected in amygdala and subthalamic nucleus. Also expressed in both healthy and cardiomyopathic heart. Up to four times more abundant in left ventricle than left atrium.

It localises to the cytoplasm. The protein localises to the membrane. Its subcellular location is the cell membrane. It catalyses the reaction a primary alcohol + NADP(+) = an aldehyde + NADPH + H(+). It carries out the reaction a secondary alcohol + NADP(+) = a ketone + NADPH + H(+). In terms of biological role, regulatory subunit of the voltage-gated potassium (Kv) Shaker channels composed of pore-forming and potassium-conducting alpha subunits and of regulatory beta subunits. The beta-1/KCNAB1 cytoplasmic subunit mediates closure of delayed rectifier potassium channels by physically obstructing the pore via its N-terminal domain and increases the speed of channel closure for other family members. Promotes the inactivation of Kv1.1/KCNA1, Kv1.2/KCNA2, Kv1.4/KCNA4, Kv1.5/KCNA5 and Kv1.6/KCNA6 alpha subunit-containing channels. Displays nicotinamide adenine dinucleotide phosphate (NADPH)-dependent aldoketoreductase activity by catalyzing the NADPH-dependent reduction of a variety of endogenous aldehydes and ketones. The binding of NADPH is required for efficient down-regulation of potassium channel activity. Oxidation of the bound NADPH restrains N-terminal domain from blocking the channel, thereby decreasing N-type inactivation of potassium channel activity. Its function is as follows. Isoform KvB1.2 shows no effect on KCNA1, KCNA2 or KCNB1. This chain is Voltage-gated potassium channel subunit beta-1, found in Homo sapiens (Human).